We begin with the raw amino-acid sequence, 429 residues long: Serine hydroxymethyltransferase (429 aa).

Residues Leu-125 and 129 to 131 (GHL) contribute to the (6S)-5,6,7,8-tetrahydrofolate site. N6-(pyridoxal phosphate)lysine is present on Lys-234.

This sequence belongs to the SHMT family. As to quaternary structure, homodimer. The cofactor is pyridoxal 5'-phosphate.

The protein resides in the cytoplasm. The catalysed reaction is (6R)-5,10-methylene-5,6,7,8-tetrahydrofolate + glycine + H2O = (6S)-5,6,7,8-tetrahydrofolate + L-serine. It participates in one-carbon metabolism; tetrahydrofolate interconversion. The protein operates within amino-acid biosynthesis; glycine biosynthesis; glycine from L-serine: step 1/1. Functionally, catalyzes the reversible interconversion of serine and glycine with tetrahydrofolate (THF) serving as the one-carbon carrier. This reaction serves as the major source of one-carbon groups required for the biosynthesis of purines, thymidylate, methionine, and other important biomolecules. Also exhibits THF-independent aldolase activity toward beta-hydroxyamino acids, producing glycine and aldehydes, via a retro-aldol mechanism. This chain is Serine hydroxymethyltransferase, found in Allorhizobium ampelinum (strain ATCC BAA-846 / DSM 112012 / S4) (Agrobacterium vitis (strain S4)).